The sequence spans 244 residues: Ribonuclease 3 2 (244 aa).

An RNase III domain is found at 11–136; that stretch reads LKALLRRLGL…LLGALYLSVG (126 aa). Glu-50 contributes to the Mg(2+) binding site. Asp-54 is a catalytic residue. The Mg(2+) site is built by Asp-122 and Glu-125. The active site involves Glu-125. One can recognise a DRBM domain in the interval 164 to 234; sequence NYKEALQAWT…AQQAYQDFIA (71 aa).

It belongs to the ribonuclease III family. In terms of assembly, homodimer. Mg(2+) serves as cofactor.

The protein resides in the cytoplasm. It carries out the reaction Endonucleolytic cleavage to 5'-phosphomonoester.. Functionally, digests double-stranded RNA. Involved in the processing of primary rRNA transcript to yield the immediate precursors to the large and small rRNAs (23S and 16S). Processes some mRNAs, and tRNAs when they are encoded in the rRNA operon. Processes pre-crRNA and tracrRNA of type II CRISPR loci if present in the organism. In Synechocystis sp. (strain ATCC 27184 / PCC 6803 / Kazusa), this protein is Ribonuclease 3 2.